Consider the following 255-residue polypeptide: Taurine import ATP-binding protein TauB (255 aa).

An ABC transporter domain is found at 2 to 229 (LQISHLYADY…RFVAGESSRS (228 aa)). An ATP-binding site is contributed by 34 to 41 (GPSGCGKT).

It belongs to the ABC transporter superfamily. Taurine importer (TC 3.A.1.17.1) family. As to quaternary structure, the complex is composed of two ATP-binding proteins (TauB), two transmembrane proteins (TauC) and a solute-binding protein (TauA).

It localises to the cell inner membrane. The enzyme catalyses taurine(out) + ATP + H2O = taurine(in) + ADP + phosphate + H(+). Its function is as follows. Part of the ABC transporter complex TauABC involved in taurine import. Responsible for energy coupling to the transport system. The protein is Taurine import ATP-binding protein TauB of Shigella dysenteriae serotype 1 (strain Sd197).